Here is a 506-residue protein sequence, read N- to C-terminus: Histidine ammonia-lyase (506 aa).

A cross-link (5-imidazolinone (Ala-Gly)) is located at residues 141 to 143 (ASG). A 2,3-didehydroalanine (Ser) modification is found at Ser142.

The protein belongs to the PAL/histidase family. Post-translationally, contains an active site 4-methylidene-imidazol-5-one (MIO), which is formed autocatalytically by cyclization and dehydration of residues Ala-Ser-Gly.

The protein localises to the cytoplasm. The enzyme catalyses L-histidine = trans-urocanate + NH4(+). The protein operates within amino-acid degradation; L-histidine degradation into L-glutamate; N-formimidoyl-L-glutamate from L-histidine: step 1/3. In Burkholderia multivorans (strain ATCC 17616 / 249), this protein is Histidine ammonia-lyase.